A 220-amino-acid polypeptide reads, in one-letter code: Ribose-5-phosphate isomerase A (220 aa).

Substrate contacts are provided by residues 25-28 (TGST), 80-83 (DGAD), and 93-96 (KGGG). Residue glutamate 102 is the Proton acceptor of the active site. Residue lysine 120 coordinates substrate.

Belongs to the ribose 5-phosphate isomerase family. As to quaternary structure, homodimer.

It carries out the reaction aldehydo-D-ribose 5-phosphate = D-ribulose 5-phosphate. Its pathway is carbohydrate degradation; pentose phosphate pathway; D-ribose 5-phosphate from D-ribulose 5-phosphate (non-oxidative stage): step 1/1. In terms of biological role, catalyzes the reversible conversion of ribose-5-phosphate to ribulose 5-phosphate. The chain is Ribose-5-phosphate isomerase A from Bacillus cereus (strain ATCC 10987 / NRS 248).